Consider the following 1342-residue polypeptide: DNA-directed RNA polymerase subunit beta (1342 aa).

This sequence belongs to the RNA polymerase beta chain family. In terms of assembly, the RNAP catalytic core consists of 2 alpha, 1 beta, 1 beta' and 1 omega subunit. When a sigma factor is associated with the core the holoenzyme is formed, which can initiate transcription.

The enzyme catalyses RNA(n) + a ribonucleoside 5'-triphosphate = RNA(n+1) + diphosphate. In terms of biological role, DNA-dependent RNA polymerase catalyzes the transcription of DNA into RNA using the four ribonucleoside triphosphates as substrates. The sequence is that of DNA-directed RNA polymerase subunit beta from Salmonella typhi.